Here is a 267-residue protein sequence, read N- to C-terminus: Alkaline ceramidase 3 (267 aa).

The Cytoplasmic portion of the chain corresponds to 1–33 (MAPAVDRKGYWGPTTSTLDWCEENYVVTLFVAE). Ca(2+)-binding residues include aspartate 19, tryptophan 20, glutamate 22, asparagine 24, and glutamate 33. The helical transmembrane segment at 34–55 (FWNTVSNLIMIIPPIFGAIQGI) threads the bilayer. The Lumenal segment spans residues 56 to 61 (RDRLEK). A helical transmembrane segment spans residues 62 to 82 (RYIAAYLALTVVGMGSWCFHM). Residue histidine 81 participates in Zn(2+) binding. The Cytoplasmic portion of the chain corresponds to 83-87 (TLKYE). The chain crosses the membrane as a helical span at residues 88-108 (MQLLDELPMIYSCCIFVYCMF). Topologically, residues 109 to 118 (ECFKTKSSIN) are lumenal. Residues 119-139 (YHLLFTLFLYSLTVTTIYLKV) traverse the membrane as a helical segment. Topologically, residues 140-141 (KE) are cytoplasmic. A helical transmembrane segment spans residues 142–162 (PIFHQVMYGMLVFTLVLRSIY). Over 163–173 (IVTWVYPWLRG) the chain is Lumenal. Residues 174-194 (LGYTSLTVFLLGFLLWNIDNI) form a helical membrane-spanning segment. The Cytoplasmic segment spans residues 195–215 (FCDSLRNFRKRVPPVLGVTTQ). Residues 216–236 (FHAWWHILTGLGSYLHILFSL) form a helical membrane-spanning segment. Zn(2+) is bound by residues histidine 217 and histidine 221. Residues 237-267 (YTRTLYLRYRPKVKFLFGIWPAVMFEPQRKH) lie on the Lumenal side of the membrane.

This sequence belongs to the alkaline ceramidase family. The cofactor is Zn(2+). In terms of tissue distribution, up-regulated with age in cerebeLlum and cerebrum.

The protein localises to the endoplasmic reticulum membrane. It is found in the golgi apparatus membrane. It carries out the reaction an N-acyl-(4R)-4-hydroxysphinganine + H2O = (4R)-hydroxysphinganine + a fatty acid. The enzyme catalyses N-(5Z,8Z,11Z,14Z-eicosatetraenoyl)-sphing-4-enine + H2O = sphing-4-enine + (5Z,8Z,11Z,14Z)-eicosatetraenoate. It catalyses the reaction N-(5Z,8Z,11Z,14Z-eicosatetraenoyl)-sphinganine + H2O = sphinganine + (5Z,8Z,11Z,14Z)-eicosatetraenoate. The catalysed reaction is N-(5Z,8Z,11Z,14Z-eicosatetraenoyl)-(4R)-hydroxysphinganine + H2O = (4R)-hydroxysphinganine + (5Z,8Z,11Z,14Z)-eicosatetraenoate. It carries out the reaction N-(11Z-eicosenoyl)-sphing-4-enine + H2O = (11Z)-eicosenoate + sphing-4-enine. The enzyme catalyses N-(11Z-eicosenoyl)-sphinganine + H2O = (11Z)-eicosenoate + sphinganine. It catalyses the reaction N-(11Z-eicosenoyl)-(4R)-hydroxysphinganine + H2O = (11Z)-eicosenoate + (4R)-hydroxysphinganine. The catalysed reaction is N-(9Z-octadecenoyl)-sphing-4-enine + H2O = sphing-4-enine + (9Z)-octadecenoate. It carries out the reaction N-(9Z-octadecenoyl)-sphinganine + H2O = sphinganine + (9Z)-octadecenoate. The enzyme catalyses N-(9Z-octadecenoyl)-(4R)-hydroxysphinganine + H2O = (4R)-hydroxysphinganine + (9Z)-octadecenoate. It catalyses the reaction an N-acylsphing-4-enine + H2O = sphing-4-enine + a fatty acid. The catalysed reaction is an N-acylsphinganine + H2O = sphinganine + a fatty acid. The protein operates within lipid metabolism; sphingolipid metabolism. Its activity is regulated as follows. Activated by Ca(2+) and inhibited by Zn(2+). Functionally, endoplasmic reticulum and Golgi ceramidase that catalyzes the hydrolysis of unsaturated long-chain C18:1-, C20:1- and C20:4-ceramides, dihydroceramides and phytoceramides into sphingoid bases like sphingosine and free fatty acids at alkaline pH. Ceramides, sphingosine, and its phosphorylated form sphingosine-1-phosphate are bioactive lipids that mediate cellular signaling pathways regulating several biological processes including cell proliferation, apoptosis and differentiation. Controls the generation of sphingosine in erythrocytes, and thereby sphingosine-1-phosphate in plasma. Through the regulation of ceramides and sphingosine-1-phosphate homeostasis in the brain may play a role in neurons survival and function. By regulating the levels of pro-inflammatory ceramides in immune cells and tissues, may modulate the inflammatory response. This chain is Alkaline ceramidase 3 (Acer3), found in Mus musculus (Mouse).